Here is a 491-residue protein sequence, read N- to C-terminus: Histamine H1 receptor (491 aa).

Residues 1–30 (MTCPNSSCVFEDKMCQGNKTAPANDAQLTP) are Extracellular-facing. 2 N-linked (GlcNAc...) asparagine glycosylation sites follow: N5 and N18. The helical transmembrane segment at 31–51 (LVVVLSTISLVTVGLNLLVLY) threads the bilayer. The Cytoplasmic segment spans residues 52–65 (AVRSERKLHTVGNL). The chain crosses the membrane as a helical span at residues 66–90 (YIVSLSVADLIVGVVVMPMNILYLL). Topologically, residues 91 to 98 (MSRWSLGR) are extracellular. A helical transmembrane segment spans residues 99–124 (PLCLFWLSMDYVASTASIFSVFILCI). C101 and C181 are disulfide-bonded. The histamine site is built by D108 and T113. An important for agonist binding region spans residues 108–113 (DYVAST). The Cytoplasmic segment spans residues 125–145 (DRYRSVQQPLKYLRYRTKTRA). Phosphothreonine occurs at positions 141 and 143. The chain crosses the membrane as a helical span at residues 146–165 (SITILAAWFLSFLWIIPILG). The Extracellular portion of the chain corresponds to 166-189 (WRHFQPKTPEPREDKCETDFYNVT). A helical transmembrane segment spans residues 190 to 212 (WFKVMTAIINFYLPTLLMLWFYA). N199 is a binding site for histamine. Over 213 to 420 (KIYKAVRQHC…MNRERKAAKQ (208 aa)) the chain is Cytoplasmic. S231 bears the Phosphoserine mark. Disordered stretches follow at residues 246–297 (QVGA…KEEK) and 360–385 (QSFS…SESS). The span at 252 to 262 (PGKESPWEVLK) shows a compositional bias: basic and acidic residues. S384, S400, and S402 each carry phosphoserine. A helical transmembrane segment spans residues 421–444 (LGFIMAAFIICWIPYFIFFMVIAF). Residues 428-432 (FIICW) form an important for agonist binding region. Y435 contributes to the histamine binding site. C445 and C448 are oxidised to a cystine. At 445-450 (CESCCN) the chain is on the extracellular side. A helical membrane pass occupies residues 451 to 473 (QHVHMFTIWLGYINSTLNPLIYP). At 474–491 (LCNENFKKTFKKILHIRS) the chain is on the cytoplasmic side.

This sequence belongs to the G-protein coupled receptor 1 family. Post-translationally, phosphorylation at sites in the second and third cytoplasmic loops independently contribute to agonist-induced receptor down-regulation. As to expression, brain, lung, small intestine, uterus, adrenal medulla and spleen.

The protein localises to the cell membrane. In terms of biological role, G-protein-coupled receptor for histamine, a biogenic amine that functions as an immune modulator and a neurotransmitter. Through the H1 receptor, histamine mediates the contraction of smooth muscles and increases capillary permeability due to contraction of terminal venules. Also mediates neurotransmission in the central nervous system and thereby regulates circadian rhythms, emotional and locomotor activities as well as cognitive functions. This Bos taurus (Bovine) protein is Histamine H1 receptor.